The primary structure comprises 203 residues: Protein GrpE 2 (203 aa).

Basic and acidic residues predominate over residues 1–12; it reads MPTRPQEPDRAA. Residues 1–64 form a disordered region; the sequence is MPTRPQEPDR…APAEDEYTTA (64 aa). Residues 45 to 56 show a composition bias toward low complexity; sequence GEPGPDAAGPAP.

It belongs to the GrpE family. As to quaternary structure, homodimer.

The protein resides in the cytoplasm. Its function is as follows. Participates actively in the response to hyperosmotic and heat shock by preventing the aggregation of stress-denatured proteins, in association with DnaK and GrpE. It is the nucleotide exchange factor for DnaK and may function as a thermosensor. Unfolded proteins bind initially to DnaJ; upon interaction with the DnaJ-bound protein, DnaK hydrolyzes its bound ATP, resulting in the formation of a stable complex. GrpE releases ADP from DnaK; ATP binding to DnaK triggers the release of the substrate protein, thus completing the reaction cycle. Several rounds of ATP-dependent interactions between DnaJ, DnaK and GrpE are required for fully efficient folding. This Streptomyces avermitilis (strain ATCC 31267 / DSM 46492 / JCM 5070 / NBRC 14893 / NCIMB 12804 / NRRL 8165 / MA-4680) protein is Protein GrpE 2.